The sequence spans 788 residues: Mediator of RNA polymerase II transcription subunit 15 (788 aa).

The interval 9-73 is interaction with SREBF1; the sequence is DWRSTAFRQK…IHFRDIHNKK (65 aa). 2 disordered regions span residues 95-139 and 260-329; these read GAAG…MAPH and QQQA…PLVS. A compositionally biased stretch (gly residues) spans 108–117; it reads QSLGGMGSLG. A compositionally biased stretch (low complexity) spans 260 to 269; the sequence is QQQALQAQPP. Pro residues predominate over residues 270 to 284; the sequence is IQQPPMQQPQPPPSQ. Low complexity-rich tracts occupy residues 285 to 294 and 309 to 329; these read ALPQQLQQMH and PVAQNQPSQLPPQSQTQPLVS. R349 carries the asymmetric dimethylarginine modification. A disordered region spans residues 412 to 530; it reads SSSIPLGRQP…PAGSSQAEEQ (119 aa). The span at 426 to 446 shows a compositional bias: low complexity; the sequence is SQSSLPMLSSPSPGQQVQTPQ. Residues 447 to 459 show a composition bias toward pro residues; the sequence is SMPPPPQPSPQPG. Low complexity predominate over residues 460-482; it reads QPSSQPNSNVSSGPAPSPSSFLP. 2 stretches are compositionally biased toward polar residues: residues 493–503 and 511–529; these read VTARTPQNFSV and TPVNPSSVMSPAGSSQAEE. The short motif at 547 to 564 is the Nuclear localization signal element; that stretch reads RRMINKIDKNEDRKKDLS. Phosphothreonine is present on T603.

This sequence belongs to the Mediator complex subunit 15 family. Component of the Mediator complex, which is composed of MED1, MED4, MED6, MED7, MED8, MED9, MED10, MED11, MED12, MED13, MED13L, MED14, MED15, MED16, MED17, MED18, MED19, MED20, MED21, MED22, MED23, MED24, MED25, MED26, MED27, MED29, MED30, MED31, CCNC, CDK8 and CDC2L6/CDK11. The MED12, MED13, CCNC and CDK8 subunits form a distinct module termed the CDK8 module. Mediator containing the CDK8 module is less active than Mediator lacking this module in supporting transcriptional activation. Individual preparations of the Mediator complex lacking one or more distinct subunits have been variously termed ARC, CRSP, DRIP, PC2, SMCC and TRAP. Interacts with SMAD2, SMAD3, SREBF1 and SREBF2. Interacts with WWTR1. Interacts with TRIM11. In terms of processing, ubiquitinated by TRIM11, leading to proteasomal degradation. Expressed in all tissues examined, including heart, brain, lung, spleen, thymus, pancreas, blood leukocyte and placenta. However, the level of expression varied, with highest expression in the placenta and peripheral blood and lowest in the pancreas and kidney.

Its subcellular location is the cytoplasm. The protein localises to the nucleus. Functionally, component of the Mediator complex, a coactivator involved in the regulated transcription of nearly all RNA polymerase II-dependent genes. Mediator functions as a bridge to convey information from gene-specific regulatory proteins to the basal RNA polymerase II transcription machinery. Mediator is recruited to promoters by direct interactions with regulatory proteins and serves as a scaffold for the assembly of a functional preinitiation complex with RNA polymerase II and the general transcription factors. Required for cholesterol-dependent gene regulation. Positively regulates the Nodal signaling pathway. In Homo sapiens (Human), this protein is Mediator of RNA polymerase II transcription subunit 15 (MED15).